The sequence spans 446 residues: Putative ZDHHC-type palmitoyltransferase 2 (446 aa).

Disordered stretches follow at residues 1–33 (MNLYNNSNSSGSSNSSSSSNNKTNIDYNDINNN) and 56–83 (QIINKNNNNNHNRNNNNNNNNNNNHNNP). N-linked (GlcNAc...) asparagine glycans are attached at residues Asn5, Asn8, Asn14, and Asn21. Over residues 56–81 (QIINKNNNNNHNRNNNNNNNNNNNHN) the composition is skewed to low complexity. N-linked (GlcNAc...) asparagine glycans are attached at residues Asn141, Asn145, Asn159, and Asn165. Transmembrane regions (helical) follow at residues 178 to 198 (IVIFLILVPYIYILNFAIFPW), 210 to 230 (IHSFISMALVIQMLCNYYLCS), 305 to 325 (YFVLFLFYTSISIIYFFTLLI), 349 to 369 (LFLLGILIIILIIAGISIMAL), and 410 to 430 (IISNFSIVFGNLSFLWLLPTI). The 51-residue stretch at 261–311 (KWCNKCNHQKPERAHHCRYCNRCVLRMDHHCQWLQNCIGLFNQKYFVLFLF) folds into the DHHC domain.

The protein belongs to the DHHC palmitoyltransferase family.

It is found in the membrane. It catalyses the reaction L-cysteinyl-[protein] + hexadecanoyl-CoA = S-hexadecanoyl-L-cysteinyl-[protein] + CoA. This chain is Putative ZDHHC-type palmitoyltransferase 2, found in Dictyostelium discoideum (Social amoeba).